The chain runs to 303 residues: Oxygen-dependent coproporphyrinogen-III oxidase (303 aa).

Serine 93 lines the substrate pocket. Residues histidine 97 and histidine 107 each coordinate a divalent metal cation. The active-site Proton donor is the histidine 107. A substrate-binding site is contributed by 109-111 (NVR). The a divalent metal cation site is built by histidine 149 and histidine 179. Residues 244–279 (YVEFNLVFDRGTLFGLQSGGRTESILLSMPPLAQWR) form an important for dimerization region. 262–264 (GGR) lines the substrate pocket.

This sequence belongs to the aerobic coproporphyrinogen-III oxidase family. Homodimer. It depends on a divalent metal cation as a cofactor.

The protein resides in the cytoplasm. It catalyses the reaction coproporphyrinogen III + O2 + 2 H(+) = protoporphyrinogen IX + 2 CO2 + 2 H2O. Its pathway is porphyrin-containing compound metabolism; protoporphyrin-IX biosynthesis; protoporphyrinogen-IX from coproporphyrinogen-III (O2 route): step 1/1. In terms of biological role, involved in the heme biosynthesis. Catalyzes the aerobic oxidative decarboxylation of propionate groups of rings A and B of coproporphyrinogen-III to yield the vinyl groups in protoporphyrinogen-IX. In Bordetella pertussis (strain Tohama I / ATCC BAA-589 / NCTC 13251), this protein is Oxygen-dependent coproporphyrinogen-III oxidase.